A 296-amino-acid chain; its full sequence is LysM and putative peptidoglycan-binding domain-containing protein 4 (296 aa).

Topologically, residues 1-217 are extracellular; sequence MRHKELLSKT…PMDGADCGIQ (217 aa). An N-linked (GlcNAc...) asparagine glycan is attached at N30. Residues 74-118 form the LysM domain; the sequence is LQRELAQEDSLNKLALQYGCKVADIKKVNNFIREQDLYALKSIKS. Residues 218–238 traverse the membrane as a helical segment; that stretch reads WWNAVFIMLLIGIVLPIFYLV. The Cytoplasmic portion of the chain corresponds to 239–296; it reads YFKIQASGETPNSLNTAAIPNGSMAMGTVPGQAPRLAVAVPTVPSADSQFSQTTQAGN.

The protein resides in the membrane. The protein is LysM and putative peptidoglycan-binding domain-containing protein 4 (LYSMD4) of Pongo abelii (Sumatran orangutan).